The primary structure comprises 179 residues: NADH dehydrogenase [ubiquinone] 1 beta subcomplex subunit 9 (179 aa).

An N-acetylalanine modification is found at Ala-2. Phosphoserine is present on Ser-85.

It belongs to the complex I LYR family. Mammalian complex I is composed of 45 different subunits.

The protein resides in the mitochondrion inner membrane. Accessory subunit of the mitochondrial membrane respiratory chain NADH dehydrogenase (Complex I), that is believed to be not involved in catalysis. Complex I functions in the transfer of electrons from NADH to the respiratory chain. The immediate electron acceptor for the enzyme is believed to be ubiquinone. In Mus musculus (Mouse), this protein is NADH dehydrogenase [ubiquinone] 1 beta subcomplex subunit 9 (Ndufb9).